A 1172-amino-acid polypeptide reads, in one-letter code: DNA-directed RNA polymerase subunit beta (1172 aa).

This sequence belongs to the RNA polymerase beta chain family. In terms of assembly, the RNAP catalytic core consists of 2 alpha, 1 beta, 1 beta' and 1 omega subunit. When a sigma factor is associated with the core the holoenzyme is formed, which can initiate transcription.

It catalyses the reaction RNA(n) + a ribonucleoside 5'-triphosphate = RNA(n+1) + diphosphate. Functionally, DNA-dependent RNA polymerase catalyzes the transcription of DNA into RNA using the four ribonucleoside triphosphates as substrates. In Pseudothermotoga lettingae (strain ATCC BAA-301 / DSM 14385 / NBRC 107922 / TMO) (Thermotoga lettingae), this protein is DNA-directed RNA polymerase subunit beta.